We begin with the raw amino-acid sequence, 658 residues long: Endoglucanase 3 (658 aa).

The signal sequence occupies residues 1–23; the sequence is MQLKNFYPKMSVLGIATVMALTA. Cys-24 is lipidated: N-palmitoyl cysteine. Cys-24 carries S-diacylglycerol cysteine lipidation. A propeptide spanning residues 24 to 265 is cleaved from the precursor; the sequence is CGDENTQALF…TDSLFIDNIY (242 aa). The disordered stretch occupies residues 42 to 83; the sequence is ENQVPVSSSDMSPTSSDAVIDPTSSSAAVVDPSTLPAEGPIT. A compositionally biased stretch (low complexity) spans 45–58; that stretch reads VPVSSSDMSPTSSD. A CBM11 domain is found at 87-277; sequence GLGTLVDDFE…DSSEVEKDQP (191 aa). The active-site Proton donor is Glu-448. The Nucleophile role is filled by Glu-597.

This sequence belongs to the glycosyl hydrolase 5 (cellulase A) family. As to quaternary structure, monomer. Post-translationally, may be a lipoprotein and may be glycosylated.

Its subcellular location is the membrane. The catalysed reaction is Endohydrolysis of (1-&gt;4)-beta-D-glucosidic linkages in cellulose, lichenin and cereal beta-D-glucans.. Functionally, exhibits both endoglucanase and cellobiosidase activities. The sequence is that of Endoglucanase 3 (cel-3) from Fibrobacter succinogenes (strain ATCC 19169 / S85).